Consider the following 660-residue polypeptide: 1-deoxy-D-xylulose-5-phosphate synthase (660 aa).

Residues His86 and 127–129 contribute to the thiamine diphosphate site; that span reads AHS. Residue Asp164 participates in Mg(2+) binding. Thiamine diphosphate is bound by residues 165–166, Asn196, Tyr306, and Glu388; that span reads GS. Residue Asn196 coordinates Mg(2+).

It belongs to the transketolase family. DXPS subfamily. In terms of assembly, homodimer. Requires Mg(2+) as cofactor. It depends on thiamine diphosphate as a cofactor.

The enzyme catalyses D-glyceraldehyde 3-phosphate + pyruvate + H(+) = 1-deoxy-D-xylulose 5-phosphate + CO2. Its pathway is metabolic intermediate biosynthesis; 1-deoxy-D-xylulose 5-phosphate biosynthesis; 1-deoxy-D-xylulose 5-phosphate from D-glyceraldehyde 3-phosphate and pyruvate: step 1/1. In terms of biological role, catalyzes the acyloin condensation reaction between C atoms 2 and 3 of pyruvate and glyceraldehyde 3-phosphate to yield 1-deoxy-D-xylulose-5-phosphate (DXP). The sequence is that of 1-deoxy-D-xylulose-5-phosphate synthase from Gluconobacter oxydans (strain 621H) (Gluconobacter suboxydans).